We begin with the raw amino-acid sequence, 381 residues long: MKRLSVLCSLLLVAAALGTELPLATPCDEEACKLPDCRCSSTNIPGGLRARDTPQFVTVTFDDGINVINIETYREVLYGRSNSNRCPAGATFYVSHEYTNYQLVNELYNRGFEIALHSISHRTPQAFWADATYQNLVQEIGDQKRQMAHFASIPASAIKGVRIPFLQMSGNTSFQVMADFDLLYDCTWPTTALTNPGLWPYTLHHESIQDCIIPPCPTASIPGPWVLPMISWRDLNNFPCSMVDGCFFTPDRTDEEGWFKFILTNFERHYLGNRAPFGFFVHEWFISSNPAIKRAFVRFMDIINNLNDVFMVNSAEVIDWVKNPVPIDRYRQQQCKFTMPSICRPSFCGPLTGTHNQLSYYMTICNTCPRNYPWVGNPLGQ.

An N-terminal signal peptide occupies residues methionine 1 to glycine 18. Disulfide bonds link cysteine 27/cysteine 39 and cysteine 32/cysteine 37. Zn(2+)-binding residues include aspartate 63, histidine 117, and histidine 121. 5 disulfides stabilise this stretch: cysteine 86-cysteine 335, cysteine 211-cysteine 216, cysteine 240-cysteine 246, cysteine 343-cysteine 365, and cysteine 348-cysteine 368. Asparagine 171 is a glycosylation site (N-linked (GlcNAc...) asparagine).

The protein belongs to the carbohydrate esterase 4 (CE4) family. Zn(2+) is required as a cofactor. As to expression, strongly expressed in the midgut. Has little or no expression in other tissues tested.

The protein resides in the secreted. It catalyses the reaction [(1-&gt;4)-N-acetyl-beta-D-glucosaminyl](n) + n H2O = chitosan + n acetate. Hydrolyzes the N-acetamido groups of N-acetyl-D-glucosamine (GlcNAc) residues in chitin. Shows activity towards the chitinous oligomers GlcNAc(3), GlcNAc(4), GlcNAc(5) and GlcNAc(6), but not GlcNAc or GlcNAc(2). Requires the substrate to occupy subsites 0, +1, and +2 for optimum catalysis. The chain is Chitin deacetylase 8 from Bombyx mori (Silk moth).